Here is a 132-residue protein sequence, read N- to C-terminus: Insulin-like 3 (132 aa).

The first 24 residues, 1-24, serve as a signal peptide directing secretion; the sequence is MSPRPLAWALVLLGAALAVALALG. Disulfide bonds link Cys-36–Cys-117, Cys-48–Cys-130, and Cys-116–Cys-121. The propeptide at 61–104 is c peptide like; it reads VAGGDRELLQWLEGRHLHGQVSDGDPMLVLVPQALPQASLHHHH.

Belongs to the insulin family. In terms of assembly, heterodimer of a B chain and an A chain linked by two disulfide bonds. As to expression, more strongly expressed in testis than in ovary.

The protein localises to the secreted. Functionally, seems to play a role in testicular function. May be a trophic hormone with a role in testicular descent in fetal life. Is a ligand for LGR8 receptor. In Canis lupus familiaris (Dog), this protein is Insulin-like 3 (INSL3).